Reading from the N-terminus, the 209-residue chain is Large ribosomal subunit protein uL3 (209 aa).

The segment at Ala132 to Gly153 is disordered. Gln150 bears the N5-methylglutamine mark.

It belongs to the universal ribosomal protein uL3 family. In terms of assembly, part of the 50S ribosomal subunit. Forms a cluster with proteins L14 and L19. Post-translationally, methylated by PrmB.

Its function is as follows. One of the primary rRNA binding proteins, it binds directly near the 3'-end of the 23S rRNA, where it nucleates assembly of the 50S subunit. In Erwinia tasmaniensis (strain DSM 17950 / CFBP 7177 / CIP 109463 / NCPPB 4357 / Et1/99), this protein is Large ribosomal subunit protein uL3.